We begin with the raw amino-acid sequence, 347 residues long: Integrin beta-1-binding protein 2 (347 aa).

Residues Cys-5, Cys-10, Cys-24, and His-27 each coordinate Zn(2+). A CHORD 1 domain is found at 5 to 64 (CRNKGCGQHFDPNTNLPDSCCHHPGVPIFHDALKGWSCCRKRTVDFSEFLNIKGCTMGPH). Positions 28–31 (PGVP) match the SH3-binding motif. Zn(2+) is bound by residues Cys-42, Cys-43, Cys-59, and His-64. Positions 70–78 (PEAPQPEGP) match the SH3-binding motif. Residues Cys-149 and Cys-154 each coordinate Zn(2+). One can recognise a CHORD 2 domain in the interval 149–208 (CQNPGCDAVYQGPESDATPCTYHPGAPRFHEGMKSWSCCGIQTLDFGAFLAQPGCRVGRH). The SH2-binding motif lies at 158–161 (YQGP). Residues Cys-168 and His-171 each coordinate Zn(2+). Residues 172–175 (PGAP) carry the SH3-binding motif. Zn(2+)-binding residues include Cys-186, Cys-187, Cys-203, and His-208. In terms of domain architecture, CS spans 215 to 304 (PASCRHDWHQ…ADPGSWAQLE (90 aa)). Positions 234–237 (YGQI) match the SH2-binding motif. The tract at residues 319–347 (LEMDEEESDDSDDDLSWTEEEEEEEAMGE) is disordered. Residues 320 to 347 (EMDEEESDDSDDDLSWTEEEEEEEAMGE) are compositionally biased toward acidic residues.

As to quaternary structure, interacts with beta-1 integrin subunit. This interaction is regulated by divalent cations, and it occurs only in absence of calcium. Expressed in skeletal and cardiac muscles but not in other tissues.

In terms of biological role, may play a role during maturation and/or organization of muscles cells. The chain is Integrin beta-1-binding protein 2 (ITGB1BP2) from Homo sapiens (Human).